The primary structure comprises 362 residues: Phosphoserine aminotransferase (362 aa).

L-glutamate contacts are provided by Ser-9 and Arg-42. Pyridoxal 5'-phosphate contacts are provided by residues 76 to 77, Trp-102, Thr-153, Asp-174, and Gln-197; that span reads GR. Residue Lys-198 is modified to N6-(pyridoxal phosphate)lysine. Pyridoxal 5'-phosphate is bound at residue 239–240; it reads NT.

The protein belongs to the class-V pyridoxal-phosphate-dependent aminotransferase family. SerC subfamily. Homodimer. Pyridoxal 5'-phosphate is required as a cofactor.

It is found in the cytoplasm. The catalysed reaction is O-phospho-L-serine + 2-oxoglutarate = 3-phosphooxypyruvate + L-glutamate. It carries out the reaction 4-(phosphooxy)-L-threonine + 2-oxoglutarate = (R)-3-hydroxy-2-oxo-4-phosphooxybutanoate + L-glutamate. The protein operates within amino-acid biosynthesis; L-serine biosynthesis; L-serine from 3-phospho-D-glycerate: step 2/3. It functions in the pathway cofactor biosynthesis; pyridoxine 5'-phosphate biosynthesis; pyridoxine 5'-phosphate from D-erythrose 4-phosphate: step 3/5. Its function is as follows. Catalyzes the reversible conversion of 3-phosphohydroxypyruvate to phosphoserine and of 3-hydroxy-2-oxo-4-phosphonooxybutanoate to phosphohydroxythreonine. The chain is Phosphoserine aminotransferase from Shigella boydii serotype 4 (strain Sb227).